The primary structure comprises 479 residues: GTPase Der (479 aa).

2 EngA-type G domains span residues 3 to 167 (FKVA…GEAR) and 208 to 383 (MRIA…KVWN). Residues 9 to 16 (GRPNVGKS), 56 to 60 (DTAGF), 119 to 122 (NKAE), 214 to 221 (GRPNAGKS), 261 to 265 (DTAGM), and 326 to 329 (NKWD) contribute to the GTP site. The KH-like domain occupies 384–468 (SRVSTGKLNR…PIRIALRTSD (85 aa)).

Belongs to the TRAFAC class TrmE-Era-EngA-EngB-Septin-like GTPase superfamily. EngA (Der) GTPase family. In terms of assembly, associates with the 50S ribosomal subunit.

GTPase that plays an essential role in the late steps of ribosome biogenesis. This chain is GTPase Der, found in Mesorhizobium japonicum (strain LMG 29417 / CECT 9101 / MAFF 303099) (Mesorhizobium loti (strain MAFF 303099)).